Consider the following 1150-residue polypeptide: ATP-dependent helicase/deoxyribonuclease subunit B (1150 aa).

ATP is bound at residue Gly-8–Ser-15. [4Fe-4S] cluster-binding residues include Cys-789, Cys-1108, Cys-1111, and Cys-1117.

Belongs to the helicase family. AddB/RexB type 1 subfamily. Heterodimer of AddA and AddB. Mg(2+) is required as a cofactor. It depends on [4Fe-4S] cluster as a cofactor.

Functionally, the heterodimer acts as both an ATP-dependent DNA helicase and an ATP-dependent, dual-direction single-stranded exonuclease. Recognizes the chi site generating a DNA molecule suitable for the initiation of homologous recombination. The AddB subunit has 5' -&gt; 3' nuclease activity but not helicase activity. This is ATP-dependent helicase/deoxyribonuclease subunit B from Clostridium tetani (strain Massachusetts / E88).